The sequence spans 926 residues: Thyroid peroxidase (926 aa).

The N-terminal stretch at 1–14 (MGARAVLGVTLAVA) is a signal peptide. Over 19 to 844 (FFASILRRKD…TCVDAGRLPR (826 aa)) the chain is Extracellular. An N-linked (GlcNAc...) asparagine glycan is attached at N129. A disulfide bridge connects residues C142 and C158. Heme b is bound at residue D238. The active-site Proton acceptor is H239. D240 is a Ca(2+) binding site. Disulfide bonds link C259-C269 and C263-C286. 2 N-linked (GlcNAc...) asparagine glycosylation sites follow: N277 and N307. 4 residues coordinate Ca(2+): T321, F323, D325, and S327. A glycan (N-linked (GlcNAc...) asparagine) is linked at N342. 2 residues coordinate heme b: E398 and H493. 7 disulfide bridges follow: C596-C653, C694-C719, C740-C780, C766-C792, C798-C812, C806-C821, and C823-C836. One can recognise a Sushi domain in the interval 738-793 (DACGFPDPVEDGGFLLCEERGQRVLVFSCRHGFRLRGPAQITCTPRGWDSPPPLCK). The EGF-like; calcium-binding domain maps to 794-837 (DINECEDETDPPCHASARCKNTKGGVLCECSDPLVLGEDGRTCV). A helical transmembrane segment spans residues 845–869 (ASVVSIALGAVLVCGLAGLAWTVVC). Residues 870–926 (RWTHADARPLLPVGEGEGDGKSPSLPLPGCGNRRDVGAAPALEVEQDLSCGSRGLCE) lie on the Cytoplasmic side of the membrane.

This sequence belongs to the peroxidase family. XPO subfamily. In terms of assembly, interacts with DUOX1, DUOX2 and CYBA. The cofactor is Ca(2+). Requires heme b as cofactor. Heme is covalently bound through a H(2)O(2)-dependent autocatalytic process. Heme insertion is important for the delivery of protein at the cell surface. In terms of processing, cleaved in its N-terminal part. Post-translationally, N-glycosylated; contains mannose and N-acetylglucosamine.

It localises to the membrane. It catalyses the reaction 2 iodide + H2O2 + 2 H(+) = diiodine + 2 H2O. The catalysed reaction is [thyroglobulin]-L-tyrosine + iodide + H2O2 + H(+) = [thyroglobulin]-3-iodo-L-tyrosine + 2 H2O. It carries out the reaction [thyroglobulin]-3-iodo-L-tyrosine + iodide + H2O2 + H(+) = [thyroglobulin]-3,5-diiodo-L-tyrosine + 2 H2O. The enzyme catalyses 2 [thyroglobulin]-3,5-diiodo-L-tyrosine + H2O2 = [thyroglobulin]-L-thyroxine + [thyroglobulin]-dehydroalanine + 2 H2O. It catalyses the reaction [thyroglobulin]-3-iodo-L-tyrosine + [thyroglobulin]-3,5-diiodo-L-tyrosine + H2O2 = [thyroglobulin]-3,3',5-triiodo-L-thyronine + [thyroglobulin]-dehydroalanine + 2 H2O. It participates in hormone biosynthesis; thyroid hormone biosynthesis. Its function is as follows. Iodination and coupling of the hormonogenic tyrosines in thyroglobulin to yield the thyroid hormones T(3) and T(4). The protein is Thyroid peroxidase (TPO) of Sus scrofa (Pig).